The sequence spans 69 residues: Metallothionein-like protein 3 (69 aa).

The protein belongs to the metallothionein superfamily. Type 15 family. As to expression, expressed in leaf mesophyll cells, root tips, and at low levels in anthers.

In terms of biological role, metallothioneins have a high content of cysteine residues that bind various heavy metals. Functions as a metal chelator of copper (Cu) and zinc (Zn). Plays a role in Cu homeostasis, specifically in the remobilization of Cu from senescing leaves. The mobilization of Cu from internal sources is important for seed development. The polypeptide is Metallothionein-like protein 3 (Arabidopsis thaliana (Mouse-ear cress)).